The sequence spans 1203 residues: DNA-directed RNA polymerase subunit beta' (1203 aa).

Residues Cys-60, Cys-62, Cys-75, and Cys-78 each contribute to the Zn(2+) site. Mg(2+)-binding residues include Asp-449, Asp-451, and Asp-453. Zn(2+)-binding residues include Cys-818, Cys-892, Cys-899, and Cys-902.

The protein belongs to the RNA polymerase beta' chain family. In terms of assembly, the RNAP catalytic core consists of 2 alpha, 1 beta, 1 beta' and 1 omega subunit. When a sigma factor is associated with the core the holoenzyme is formed, which can initiate transcription. The cofactor is Mg(2+). It depends on Zn(2+) as a cofactor.

It carries out the reaction RNA(n) + a ribonucleoside 5'-triphosphate = RNA(n+1) + diphosphate. DNA-dependent RNA polymerase catalyzes the transcription of DNA into RNA using the four ribonucleoside triphosphates as substrates. The chain is DNA-directed RNA polymerase subunit beta' from Bacillus cereus (strain ZK / E33L).